The primary structure comprises 206 residues: Guanylate kinase (206 aa).

Residues 7–185 (GIVLVLCAPS…AYDELRAAYL (179 aa)) enclose the Guanylate kinase-like domain. ATP is bound at residue 14 to 21 (APSGTGKT).

The protein belongs to the guanylate kinase family.

It localises to the cytoplasm. It carries out the reaction GMP + ATP = GDP + ADP. Its function is as follows. Essential for recycling GMP and indirectly, cGMP. The protein is Guanylate kinase of Oleidesulfovibrio alaskensis (strain ATCC BAA-1058 / DSM 17464 / G20) (Desulfovibrio alaskensis).